A 172-amino-acid chain; its full sequence is Small ribosomal subunit protein uS5 (172 aa).

An S5 DRBM domain is found at 15–78; the sequence is LNDKLIFINR…ANAKRNLSRI (64 aa).

Belongs to the universal ribosomal protein uS5 family. As to quaternary structure, part of the 30S ribosomal subunit. Contacts proteins S4 and S8.

Functionally, with S4 and S12 plays an important role in translational accuracy. In terms of biological role, located at the back of the 30S subunit body where it stabilizes the conformation of the head with respect to the body. This is Small ribosomal subunit protein uS5 from Dehalococcoides mccartyi (strain CBDB1).